We begin with the raw amino-acid sequence, 178 residues long: Caveolin-1 (178 aa).

An N-acetylserine modification is found at S2. S2 is modified (phosphoserine). The segment at 2–94 is required for homooligomerization; that stretch reads SGGKYVDAEG…WKASFTTFTV (93 aa). Over 2-104 the chain is Cytoplasmic; the sequence is SGGKYVDAEG…TKYWFYRLLS (103 aa). The residue at position 5 (K5) is an N6-acetyllysine; alternate. K5 participates in a covalent cross-link: Glycyl lysine isopeptide (Lys-Gly) (interchain with G-Cter in ubiquitin); alternate. Phosphotyrosine is present on Y6. Residue Y14 is modified to Phosphotyrosine; by ABL1. The residue at position 25 (Y25) is a Phosphotyrosine. Glycyl lysine isopeptide (Lys-Gly) (interchain with G-Cter in ubiquitin) cross-links involve residues K26, K30, K39, K47, and K57. An interaction with CAVIN3 region spans residues 82–94; sequence DGIWKASFTTFTV. Positions 105–125 form an intramembrane region, helical; the sequence is ALLGIPLALLWGIYFAILSFL. Topologically, residues 126–178 are cytoplasmic; that stretch reads HIWAVVPCIRSYLIEIQCISRVYSICIHTFCDPLFEAIGKVFSNIRATVQKEI. Residues 131 to 142 form an interacts with SPRY1, SPRY2, SPRY3 and SPRY4 region; it reads VPCIRSYLIEIQ. 3 S-palmitoyl cysteine lipidation sites follow: C133, C143, and C156. Residues 149-160 are interacts with SPRY1, SPRY2, and SPRY4; it reads SICIHTFCDPLF. The segment at 167–178 is interacts with SPRY1, SPRY2, SPRY3 and SPRY4; it reads FSNIRATVQKEI.

Belongs to the caveolin family. In terms of assembly, homooligomer. Interacts with GLIPR2. Interacts with NOSTRIN. Interacts with SNAP25 and STX1A. Interacts (via the N-terminus) with DPP4; the interaction is direct. Interacts with CTNNB1, CDH1 and JUP. Interacts with PACSIN2; this interaction induces membrane tubulation. Interacts with SLC7A9. Interacts with BMX and BTK. Interacts with TGFBR1. Interacts with CAVIN3 (via leucine-zipper domain) in a cholesterol-sensitive manner. Interacts with CAVIN1. Interacts with EHD2 in a cholesterol-dependent manner. Forms a ternary complex with UBXN6 and VCP; mediates CAV1 targeting to lysosomes for degradation. Interacts with ABCG1; this interaction regulates ABCG1-mediated cholesterol efflux. Interacts with NEU3; this interaction enhances NEU3 sialidase activity within caveola. Interacts (via C-terminus) with SPRY1, SPRY2 (via C-terminus), SPRY3, and SPRY4. Interacts with IGFBP5; this interaction allows trafficking of IGFBP5 from the plasma membrane to the nucleus. In terms of processing, phosphorylated at Tyr-14 by ABL1 in response to oxidative stress. Ubiquitinated. Undergo monoubiquitination and multi- and/or polyubiquitination. Monoubiquitination of N-terminal lysines promotes integration in a ternary complex with UBXN6 and VCP which promotes oligomeric CAV1 targeting to lysosomes for degradation. Ubiquitinated by ZNRF1; leading to degradation and modulation of the TLR4-mediated immune response.

The protein resides in the golgi apparatus membrane. It localises to the cell membrane. It is found in the membrane. Its subcellular location is the caveola. The protein localises to the membrane raft. Functionally, may act as a scaffolding protein within caveolar membranes. Forms a stable heterooligomeric complex with CAV2 that targets to lipid rafts and drives caveolae formation. Mediates the recruitment of CAVIN proteins (CAVIN1/2/3/4) to the caveolae. Interacts directly with G-protein alpha subunits and can functionally regulate their activity. Involved in the costimulatory signal essential for T-cell receptor (TCR)-mediated T-cell activation. Its binding to DPP4 induces T-cell proliferation and NF-kappa-B activation in a T-cell receptor/CD3-dependent manner. Recruits CTNNB1 to caveolar membranes and may regulate CTNNB1-mediated signaling through the Wnt pathway. Negatively regulates TGFB1-mediated activation of SMAD2/3 by mediating the internalization of TGFBR1 from membrane rafts leading to its subsequent degradation. Binds 20(S)-hydroxycholesterol (20(S)-OHC). This Ornithorhynchus anatinus (Duckbill platypus) protein is Caveolin-1 (CAV1).